The chain runs to 448 residues: GA-binding protein subunit beta-2 (448 aa).

5 ANK repeats span residues 5 to 34, 37 to 66, 70 to 99, 103 to 132, and 136 to 166; these read DLGKRLLEAARKGQDDEVRTLMANGAPFTT, LGTSPLHLAAQYGHYSTAEVLLRAGVSRDA, VDRTPLHMAAADGHAHIVELLVRNGADVNA, LKMTALHWATERHHRDVVELLIKYGADVHA, and FDKSAFDIALEKNNAEILVILQEAMQNQVNV. A Phosphoserine modification is found at Ser256. Disordered stretches follow at residues 325 to 354 and 420 to 448; these read EEEEKLPLTKKPRIGEKTNSVEESKEGNER and ELEERETKVTGSAGTTEPHTRVSMATVSS. A compositionally biased stretch (basic and acidic residues) spans 337 to 354; the sequence is RIGEKTNSVEESKEGNER. The stretch at 345-395 forms a coiled coil; that stretch reads VEESKEGNERELLQQQLQEANRRAQEYRHQLLKKEQEAEQYRLKLEAIARQ. Over residues 428–448 the composition is skewed to polar residues; the sequence is VTGSAGTTEPHTRVSMATVSS.

As to quaternary structure, heterotetramer of two alpha and two beta subunits. The C-terminal is necessary for the formation of a heterotetrameric GABP-alpha-2/beta-2 complex, and also facilitates homotypic dimerization. Interacts with ADGRB2.

It is found in the nucleus. Functionally, may function as transcription factor capable of interacting with purine rich repeats (GA repeats). The sequence is that of GA-binding protein subunit beta-2 (GABPB2) from Homo sapiens (Human).